The chain runs to 792 residues: MLLRTVSSATAETTAALISKNTYLDFFKRSTSISHLAQTHAQIILHGFRNDISLLTKLTQRLSDLGAIYYARDIFLSVQRPDVFLFNVLMRGFSVNESPHSSLSVFAHLRKSTDLKPNSSTYAFAISAASGFRDDRAGRVIHGQAVVDGCDSELLLGSNIVKMYFKFWRVEDARKVFDRMPEKDTILWNTMISGYRKNEMYVESIQVFRDLINESCTRLDTTTLLDILPAVAELQELRLGMQIHSLATKTGCYSHDYVLTGFISLYSKCGKIKMGSALFREFRKPDIVAYNAMIHGYTSNGETELSLSLFKELMLSGARLRSSTLVSLVPVSGHLMLIYAIHGYCLKSNFLSHASVSTALTTVYSKLNEIESARKLFDESPEKSLPSWNAMISGYTQNGLTEDAISLFREMQKSEFSPNPVTITCILSACAQLGALSLGKWVHDLVRSTDFESSIYVSTALIGMYAKCGSIAEARRLFDLMTKKNEVTWNTMISGYGLHGQGQEALNIFYEMLNSGITPTPVTFLCVLYACSHAGLVKEGDEIFNSMIHRYGFEPSVKHYACMVDILGRAGHLQRALQFIEAMSIEPGSSVWETLLGACRIHKDTNLARTVSEKLFELDPDNVGYHVLLSNIHSADRNYPQAATVRQTAKKRKLAKAPGYTLIEIGETPHVFTSGDQSHPQVKEIYEKLEKLEGKMREAGYQPETELALHDVEEEERELMVKVHSERLAIAFGLIATEPGTEIRIIKNLRVCLDCHTVTKLISKITERVIVVRDANRFHHFKDGVCSCGDYW.

PPR repeat units lie at residues 51–81 (DISL…VQRP), 82–117 (DVFL…DLKP), 118–152 (NSST…GCDS), 153–183 (ELLL…MPEK), 184–218 (DTIL…SCTR), 220–254 (DTTT…GCYS), 255–285 (HDYV…FRKP), 286–320 (DIVA…GARL), 321–352 (RSST…NFLS), 353–383 (HASV…SPEK), 384–418 (SLPS…EFSP), 419–453 (NPVT…DFES), 454–484 (SIYV…MTKK), 485–519 (NEVT…GITP), 520–555 (TPVT…GFEP), and 556–586 (SVKH…MSIE). Residues 591–666 (VWETLLGACR…APGYTLIEIG (76 aa)) are type E motif. Residues 667 to 697 (ETPHVFTSGDQSHPQVKEIYEKLEKLEGKMR) are type E(+) motif. Positions 698-792 (EAGYQPETEL…DGVCSCGDYW (95 aa)) are type DYW motif.

It belongs to the PPR family. PCMP-H subfamily.

The protein is Pentatricopeptide repeat-containing protein At4g30700 (DYW9) of Arabidopsis thaliana (Mouse-ear cress).